The following is a 556-amino-acid chain: Arginine--tRNA ligase 2 (556 aa).

Residues 132–142 (ANPTGDLHLGH) carry the 'HIGH' region motif.

The protein belongs to the class-I aminoacyl-tRNA synthetase family. Monomer.

It is found in the cytoplasm. The catalysed reaction is tRNA(Arg) + L-arginine + ATP = L-arginyl-tRNA(Arg) + AMP + diphosphate. This chain is Arginine--tRNA ligase 2, found in Bacillus thuringiensis subsp. konkukian (strain 97-27).